The following is a 525-amino-acid chain: Chromosomal replication initiator protein DnaA (525 aa).

A domain I, interacts with DnaA modulators region spans residues 1-71 (MNDFWQHCSA…SDLARDFWNA (71 aa)). The segment at 71 to 188 (APIEVQFVLD…GEADSMYERS (118 aa)) is domain II. Residues 160 to 182 (AAAGRRTWRPGPGAAPANGGEAD) are disordered. Residues 169–181 (PGPGAAPANGGEA) are compositionally biased toward low complexity. The tract at residues 189–405 (KLNPVLTFDN…GALRKILAYS (217 aa)) is domain III, AAA+ region. ATP-binding residues include G233, G235, K236, and T237. The interval 406–525 (KFHGREISIE…LHVLEQTLKG (120 aa)) is domain IV, binds dsDNA.

The protein belongs to the DnaA family. Oligomerizes as a right-handed, spiral filament on DNA at oriC.

It is found in the cytoplasm. Its function is as follows. Plays an essential role in the initiation and regulation of chromosomal replication. ATP-DnaA binds to the origin of replication (oriC) to initiate formation of the DNA replication initiation complex once per cell cycle. Binds the DnaA box (a 9 base pair repeat at the origin) and separates the double-stranded (ds)DNA. Forms a right-handed helical filament on oriC DNA; dsDNA binds to the exterior of the filament while single-stranded (ss)DNA is stabiized in the filament's interior. The ATP-DnaA-oriC complex binds and stabilizes one strand of the AT-rich DNA unwinding element (DUE), permitting loading of DNA polymerase. After initiation quickly degrades to an ADP-DnaA complex that is not apt for DNA replication. Binds acidic phospholipids. The chain is Chromosomal replication initiator protein DnaA from Burkholderia ambifaria (strain ATCC BAA-244 / DSM 16087 / CCUG 44356 / LMG 19182 / AMMD) (Burkholderia cepacia (strain AMMD)).